The chain runs to 297 residues: D-aminoacyl-tRNA deacylase (297 aa).

This sequence belongs to the DtdA deacylase family. As to quaternary structure, monomer. The cofactor is Zn(2+).

The enzyme catalyses a D-aminoacyl-tRNA + H2O = a tRNA + a D-alpha-amino acid + H(+). It carries out the reaction glycyl-tRNA(Ala) + H2O = tRNA(Ala) + glycine + H(+). D-aminoacyl-tRNA deacylase with broad substrate specificity. By recycling D-aminoacyl-tRNA to D-amino acids and free tRNA molecules, this enzyme counteracts the toxicity associated with the formation of D-aminoacyl-tRNA entities in vivo. The chain is D-aminoacyl-tRNA deacylase from Methanosarcina mazei (strain ATCC BAA-159 / DSM 3647 / Goe1 / Go1 / JCM 11833 / OCM 88) (Methanosarcina frisia).